The primary structure comprises 387 residues: Eukaryotic translation initiation factor 3 subunit M (387 aa).

A PCI domain is found at 181–340 (LSSKVMIELL…RKVHISSTMH (160 aa)).

It belongs to the eIF-3 subunit M family. Component of the eukaryotic translation initiation factor 3 (eIF-3) complex. The eIF-3 complex interacts with pix.

It localises to the cytoplasm. The protein localises to the golgi apparatus. Its function is as follows. Component of the eukaryotic translation initiation factor 3 (eIF-3) complex, which is involved in protein synthesis of a specialized repertoire of mRNAs and, together with other initiation factors, stimulates binding of mRNA and methionyl-tRNAi to the 40S ribosome. The eIF-3 complex specifically targets and initiates translation of a subset of mRNAs involved in cell proliferation. The sequence is that of Eukaryotic translation initiation factor 3 subunit M from Drosophila mojavensis (Fruit fly).